The primary structure comprises 142 residues: C-type lectin 13 (142 aa).

Residues 1 to 23 form the signal peptide; that stretch reads MGRLVFVSFGGWDVFLSLSGTGA. Intrachain disulfides connect Cys25–Cys36, Cys53–Cys138, and Cys115–Cys130. The region spanning 32–139 is the C-type lectin domain; it reads YEGHCYRVFQ…CSKTHNVVCK (108 aa).

Belongs to the snaclec family. As to quaternary structure, heteromultimer; disulfide-linked. Expressed by the venom gland.

It localises to the secreted. Functionally, interferes with one step of hemostasis (modulation of platelet aggregation, or coagulation cascade, for example). The polypeptide is C-type lectin 13 (Crotalus adamanteus (Eastern diamondback rattlesnake)).